Consider the following 130-residue polypeptide: RutC family protein in leuC 5'region (130 aa).

It belongs to the RutC family.

The sequence is that of RutC family protein in leuC 5'region from Leuconostoc mesenteroides subsp. cremoris.